Reading from the N-terminus, the 81-residue chain is MSHSVKIYDTCIGCTQCVRACPTDVLEMIPWDGCKAKQIASAPRTEDCVGCKRCESACPTDFLSVRVYLGAETTRSMGLAY.

4Fe-4S ferredoxin-type domains are found at residues 2 to 31 and 39 to 68; these read SHSVKIYDTCIGCTQCVRACPTDVLEMIPW and IASAPRTEDCVGCKRCESACPTDFLSVRVY. 8 residues coordinate [4Fe-4S] cluster: C11, C14, C17, C21, C48, C51, C54, and C58.

The eukaryotic PSI reaction center is composed of at least 11 subunits. Requires [4Fe-4S] cluster as cofactor.

It localises to the plastid thylakoid membrane. It carries out the reaction reduced [plastocyanin] + hnu + oxidized [2Fe-2S]-[ferredoxin] = oxidized [plastocyanin] + reduced [2Fe-2S]-[ferredoxin]. Apoprotein for the two 4Fe-4S centers FA and FB of photosystem I (PSI); essential for photochemical activity. FB is the terminal electron acceptor of PSI, donating electrons to ferredoxin. The C-terminus interacts with PsaA/B/D and helps assemble the protein into the PSI complex. Required for binding of PsaD and PsaE to PSI. PSI is a plastocyanin-ferredoxin oxidoreductase, converting photonic excitation into a charge separation, which transfers an electron from the donor P700 chlorophyll pair to the spectroscopically characterized acceptors A0, A1, FX, FA and FB in turn. The chain is Photosystem I iron-sulfur center from Cuscuta gronovii (Common dodder).